A 378-amino-acid polypeptide reads, in one-letter code: tRNA (guanine(26)-N(2))-dimethyltransferase (378 aa).

The Trm1 methyltransferase domain occupies 4 to 374 (KEVTEGKVRI…KEYEEITKCI (371 aa)). Residues Arg-44, Arg-69, Asp-87, Asp-114, and Ala-115 each coordinate S-adenosyl-L-methionine. The Zn(2+) site is built by Cys-246, Cys-249, Cys-263, and Cys-266.

This sequence belongs to the class I-like SAM-binding methyltransferase superfamily. Trm1 family.

It carries out the reaction guanosine(26) in tRNA + 2 S-adenosyl-L-methionine = N(2)-dimethylguanosine(26) in tRNA + 2 S-adenosyl-L-homocysteine + 2 H(+). Its function is as follows. Dimethylates a single guanine residue at position 26 of a number of tRNAs using S-adenosyl-L-methionine as donor of the methyl groups. This chain is tRNA (guanine(26)-N(2))-dimethyltransferase, found in Saccharolobus solfataricus (strain ATCC 35092 / DSM 1617 / JCM 11322 / P2) (Sulfolobus solfataricus).